A 330-amino-acid polypeptide reads, in one-letter code: Putative protein N-methyltransferase FAM86B1 (330 aa).

S-adenosyl-L-methionine contacts are provided by residues Trp139, 165–167, Trp228, and Ala247; that span reads GSG.

Belongs to the class I-like SAM-binding methyltransferase superfamily. EEF2KMT family.

The protein is Putative protein N-methyltransferase FAM86B1 of Homo sapiens (Human).